A 333-amino-acid chain; its full sequence is NADH-quinone oxidoreductase subunit H (333 aa).

The next 8 membrane-spanning stretches (helical) occupy residues 15-35 (IALF…FVTY), 88-108 (YVLA…VLPF), 117-137 (IGVG…GVVA), 165-185 (LVMS…VDIV), 191-211 (VWFI…AVAE), 241-261 (FFML…TILF), 274-294 (IPGA…LIWF), and 313-333 (VLLP…AWFF).

The protein belongs to the complex I subunit 1 family. As to quaternary structure, NDH-1 is composed of 14 different subunits. Subunits NuoA, H, J, K, L, M, N constitute the membrane sector of the complex.

Its subcellular location is the cell membrane. It catalyses the reaction a quinone + NADH + 5 H(+)(in) = a quinol + NAD(+) + 4 H(+)(out). Functionally, NDH-1 shuttles electrons from NADH, via FMN and iron-sulfur (Fe-S) centers, to quinones in the respiratory chain. The immediate electron acceptor for the enzyme in this species is believed to be ubiquinone. Couples the redox reaction to proton translocation (for every two electrons transferred, four hydrogen ions are translocated across the cytoplasmic membrane), and thus conserves the redox energy in a proton gradient. This subunit may bind ubiquinone. The chain is NADH-quinone oxidoreductase subunit H from Geobacillus kaustophilus (strain HTA426).